A 433-amino-acid chain; its full sequence is tRNA modification GTPase MnmE (433 aa).

Residues Arg-24, Glu-81, and Arg-120 each coordinate (6S)-5-formyl-5,6,7,8-tetrahydrofolate. The 144-residue stretch at 216-359 folds into the TrmE-type G domain; that stretch reads GVEIVVLGAP…LLAALRARVE (144 aa). Asn-226 contributes to the K(+) binding site. GTP contacts are provided by residues 226–231, 245–251, 270–273, and 340–342; these read NAGKST, SDIPGTT, DTAG, and SAR. Ser-230 lines the Mg(2+) pocket. Ser-245, Ile-247, and Thr-250 together coordinate K(+). Mg(2+) is bound at residue Thr-251. Lys-433 lines the (6S)-5-formyl-5,6,7,8-tetrahydrofolate pocket.

It belongs to the TRAFAC class TrmE-Era-EngA-EngB-Septin-like GTPase superfamily. TrmE GTPase family. In terms of assembly, homodimer. Heterotetramer of two MnmE and two MnmG subunits. K(+) serves as cofactor.

It localises to the cytoplasm. Its function is as follows. Exhibits a very high intrinsic GTPase hydrolysis rate. Involved in the addition of a carboxymethylaminomethyl (cmnm) group at the wobble position (U34) of certain tRNAs, forming tRNA-cmnm(5)s(2)U34. The chain is tRNA modification GTPase MnmE from Acidiphilium cryptum (strain JF-5).